A 338-amino-acid chain; its full sequence is Protein SGT1 homolog (338 aa).

An N-acetylalanine modification is found at alanine 2. TPR repeat units lie at residues 11 to 45, 46 to 79, and 80 to 113; these read AASRLFRSFSDALIEQDPQAALEELTKALEQKPDD, APYYCQRAYCHILLGNYSDAVADAKKSLELNPNS, and STALLRKGICEYHEKNYAAALETFTEGQKLNSAD. The 90-residue stretch at 142–231 folds into the CS domain; it reads QSKIKYDWYQ…PEAVRWEKLE (90 aa). The region spanning 249–338 is the SGS domain; it reads LYPSSSHYTR…PPDDMEWKKY (90 aa). Phosphoserine is present on serine 254. Residue threonine 257 is modified to Phosphothreonine. Lysine 268 participates in a covalent cross-link: Glycyl lysine isopeptide (Lys-Gly) (interchain with G-Cter in SUMO1); alternate. Residue lysine 268 forms a Glycyl lysine isopeptide (Lys-Gly) (interchain with G-Cter in SUMO2); alternate linkage. Residue serine 304 is modified to Phosphoserine.

The protein belongs to the SGT1 family. In terms of assembly, probably associates with SCF (SKP1-CUL1-F-box protein) complex through interaction with SKP1. Interacts with S100A6. Interacts with HSP90. Phosphorylated at Ser-254 and Ser-304, dephosphorylation promotes nuclear translocation, most likely due to disruption of the SUGT1-HSP90 complex.

Its subcellular location is the cytoplasm. It is found in the nucleus. In terms of biological role, may play a role in ubiquitination and subsequent proteasomal degradation of target proteins. In Bos taurus (Bovine), this protein is Protein SGT1 homolog.